The sequence spans 627 residues: MDKNTVIGLVLIGLVIFGFSWLNRPDPQEIEAQRKAAIEAARQDSIAKAEAELLAARTQEATPDSIKQAAGYNQYGLLAAATAGAEEQVELANGKIALKLSTKGGAIREVLLRDYKTYDGKPLYLFREGESDFNLPLRTLDNRLVDTRDLYFSPISRTDSSVVMRLAVDSASYLDLAYVLLPDDYRLRMTVSGQNLQSLFPANMTMQDLEWSQRIRRQEKSWKFENQYTSIYYKYSGDEVDRLSDSKQEDKKTLEEPLHWVSFKDKYFASVLVCDSYFENNKLAQKTAAAGSDYLKNCTMSATFPLDVRPGTKAGFTFFFGPLKYNMLRAYDKGMKAEDNLDLDHLVYLGASIFRWINRYMIIPASTFLQQYFSNWGLIILLLTLGIKLLISPLAYKGYLSSAKMRLLRPQVQEINAKYPGKDQESMMKRQSATMNLYRAAGAGPMSGCLPMLLQFPFLIAMYMYFPTTIDIRQQSFLWAEDLSSYDAVFSWTADIPLLSQFYGNHVSLFCLLMSISNILYIRYTMNQSDTGQEGMAMLKWMPYITTVMFLFFFNQNASGLCYYYFLSSIITVIQYMSSRFIINEEKLMAKLEANKTKPRKKSKWMARLEEAQRQQEAMRRQQQKRK.

6 helical membrane-spanning segments follow: residues 3–23, 376–396, 450–470, 502–522, 534–554, and 558–578; these read KNTV…SWLN, WGLI…PLAY, LPML…PTTI, FYGN…ILYI, EGMA…LFFF, and ASGL…QYMS.

It belongs to the OXA1/ALB3/YidC family. Type 1 subfamily. As to quaternary structure, interacts with the Sec translocase complex via SecD. Specifically interacts with transmembrane segments of nascent integral membrane proteins during membrane integration.

The protein resides in the cell inner membrane. Functionally, required for the insertion and/or proper folding and/or complex formation of integral membrane proteins into the membrane. Involved in integration of membrane proteins that insert both dependently and independently of the Sec translocase complex, as well as at least some lipoproteins. Aids folding of multispanning membrane proteins. This is Membrane protein insertase YidC from Porphyromonas gingivalis (strain ATCC 33277 / DSM 20709 / CIP 103683 / JCM 12257 / NCTC 11834 / 2561).